Here is a 153-residue protein sequence, read N- to C-terminus: 3-hydroxyacyl-[acyl-carrier-protein] dehydratase FabZ (153 aa).

H59 is a catalytic residue.

It belongs to the thioester dehydratase family. FabZ subfamily.

It is found in the cytoplasm. It carries out the reaction a (3R)-hydroxyacyl-[ACP] = a (2E)-enoyl-[ACP] + H2O. Involved in unsaturated fatty acids biosynthesis. Catalyzes the dehydration of short chain beta-hydroxyacyl-ACPs and long chain saturated and unsaturated beta-hydroxyacyl-ACPs. The chain is 3-hydroxyacyl-[acyl-carrier-protein] dehydratase FabZ from Thermosynechococcus vestitus (strain NIES-2133 / IAM M-273 / BP-1).